Reading from the N-terminus, the 509-residue chain is MAEEQAYHVNKGLECIKSLKASPPDLSTIKDALESWREGLSPSGRATPNPDTSEGDHQNINQSCSPAIGSDKVDMSPEDNLGFREITCNDSEAGLGGVLDKGSNSQVQRYYVYSHGGEEIEGLEDADSLVVQANPPVTDTFNGGEDGSDDSDVDSGPDDPGRDPLYDRGSAAGNDVSRSTDVEKLEGDDIQEVLNSQKSKGGRFQGGKILRVPEIPDVKNSRPSAQSIKKGTDGNSVLSGTVTECSSISGATQAVPESRWESSERNASVGSVPKSARSAKTIQGLTQESGTIASLTQPKENDSEFEYEDDLFTEMQEIRASIAKIHDDNKTILSKLDSLLLLKGEIDTIKKQISKQNISISTIEGHLSSIMIAIPGFGKDIKDPTSEVELNPDLRPIISRDSGRALAEVLKKPAVDRSQKSGIKVNSGSKGQLLKDLQLKPVDKQASSAIEFVPSDHESSRSVIRSIIKSSKLNIDHKDYLLDLLNDVKGSKDLKEFHKMLTAILAKQP.

Disordered regions lie at residues 33 to 84 (LESW…LGFR), 131 to 236 (VQAN…DGNS), and 256 to 281 (PESRWESSERNASVGSVPKSARSAKT). Residues 44 to 65 (GRATPNPDTSEGDHQNINQSCS) show a composition bias toward polar residues. Positions 146-157 (DGSDDSDVDSGP) are enriched in acidic residues. A Phosphoserine modification is found at S151. Over residues 178 to 187 (RSTDVEKLEG) the composition is skewed to basic and acidic residues. Residues 221-236 (SRPSAQSIKKGTDGNS) show a composition bias toward polar residues. Positions 303–376 (SEFEYEDDLF…LSSIMIAIPG (74 aa)) are multimerization. The segment at 459–509 (SSRSVIRSIIKSSKLNIDHKDYLLDLLNDVKGSKDLKEFHKMLTAILAKQP) is interaction with the nucleocapsid (N-RNA).

It belongs to the morbillivirus P protein family. Homotetramer. Interacts (via multimerization domain) with polymerase L; this interaction forms the polymerase L-P complex. Interacts (via N-terminus) with N0 (via Ncore); this interaction allows P to chaperon N0 to avoid N polymerization before encapsidation. Interacts (via C-terminus) with N-RNA template; this interaction positions the polymerase on the template for both transcription and replication. Interacts with host ISG15; this interaction disrupts the activity of the N0-P complex. Post-translationally, phosphorylation on serines by host CK2 is necessary for the formation of viral factories.

Functionally, essential cofactor of the RNA polymerase L that plays a central role in the transcription and replication by forming the polymerase complex with RNA polymerase L and recruiting L to the genomic N-RNA template for RNA synthesis. Also plays a central role in the encapsidation of nascent RNA chains by forming the encapsidation complex with the nucleocapsid protein N (N-P complex). Acts as a chaperone for newly synthesized free N protein, so-called N0, allowing encapsidation of nascent RNA chains during replication. The nucleoprotein protein N prevents excessive phosphorylation of P, which leads to down-regulation of viral transcription/ replication. Participates, together with N, in the formation of viral factories (viroplasms), which are large inclusions in the host cytoplasm where replication takes place. The polypeptide is Phosphoprotein (P/V) (Capra hircus (Goat)).